The primary structure comprises 315 residues: N(6)-hydroxylysine O-acetyltransferase (315 aa).

This sequence belongs to the IucB family.

Its subcellular location is the cytoplasm. The protein resides in the cell membrane. It catalyses the reaction N(6)-hydroxy-L-lysine + acetyl-CoA = N(6)-acetyl-N(6)-hydroxy-L-lysine + CoA. The protein operates within siderophore biosynthesis; aerobactin biosynthesis. Catalyzes the transfer of acetyl from acetyl-CoA to the N-hydroxylysine. Involved in the biosynthesis of the siderophore aerobactin which is a chelator that mediates the high-affinity iron transport systems induced under iron-stressed conditions. The chain is N(6)-hydroxylysine O-acetyltransferase (iucB) from Escherichia coli.